Consider the following 132-residue polypeptide: Heat shock protein 15 homolog (132 aa).

The 63-residue stretch at 11–73 folds into the S4 RNA-binding domain; that stretch reads VRLDKWLWAA…DEREVRVLQV (63 aa). Basic and acidic residues-rich tracts occupy residues 94 to 105 and 114 to 125; these read LKKRAENSEARR and PERRPDKQERRQ. The tract at residues 94-132 is disordered; it reads LKKRAENSEARRFNSQFAPSPERRPDKQERRQLIKVKQY.

Belongs to the HSP15 family.

In terms of biological role, may play an important role in binding of nucleic acid. More specific for RNA. The protein is Heat shock protein 15 homolog (hslR) of Aeromonas salmonicida.